The following is a 308-amino-acid chain: MQVFQRKEDSSWGNSMPTTNSNIQGSESFSLTKDMIMSTTQLPAMKHSGLQLQNQDSTSSQSTEEESGGGEVASFGEYKRYGCSIVNNNLSGYIENLGKPIENYTKSITTSSMVSQDSVFPAPTSGQISWSLQCAETSHFNGFLAPEYASTPTALPHLEMMGLVSSRVPLPHHIQENEPIFVNAKQYHAILRRRKHRAKLEAQNKLIKCRKPYLHESRHLHALKRARGSGGRFLNTKKLQESSNSLCSSQMANGQNFSMSPHGGGSGIGSSSISPSSNSNCINMFQNPQFRFSGYPSTHHASALMSGT.

A compositionally biased stretch (basic and acidic residues) spans 1–10 (MQVFQRKEDS). Disordered regions lie at residues 1 to 26 (MQVF…IQGS) and 49 to 71 (GLQL…GGGE). Positions 11–26 (SWGNSMPTTNSNIQGS) are enriched in polar residues. Positions 181-204 (FVNAKQYHAILRRRKHRAKLEAQN) match the Subunit association domain (SAD) motif. The NFYA/HAP2-type DNA-binding region spans 211–236 (KPYLHESRHLHALKRARGSGGRFLNT). Residues 251 to 273 (MANGQNFSMSPHGGGSGIGSSSI) form a disordered region.

This sequence belongs to the NFYA/HAP2 subunit family. Heterotrimeric transcription factor composed of three components, NF-YA, NF-YB and NF-YC. NF-YB and NF-YC must interact and dimerize for NF-YA association and DNA binding. As to expression, expressed in the whole plant, except roots. Present in etiolated seedlings.

The protein resides in the nucleus. Stimulates the transcription of various genes by recognizing and binding to a CCAAT motif in promoters. Involved in the blue light (BL) and abscisic acid (ABA) signaling pathways. The polypeptide is Nuclear transcription factor Y subunit A-5 (NFYA5) (Arabidopsis thaliana (Mouse-ear cress)).